The following is a 270-amino-acid chain: tRNA 2-(methylsulfanyl)-N(6)-isopentenyladenosine(37) hydroxylase (270 aa).

Fe cation-binding residues include Glu59, Glu137, His140, Glu190, Glu219, and His222.

The protein belongs to the MiaE family. In terms of assembly, monomer. Requires Fe cation as cofactor.

It carries out the reaction 2-methylsulfanyl-N(6)-dimethylallyladenosine(37) in tRNA + AH2 + O2 = N(6)-[(2E)-4-hydroxy-3-methylbut-2-en-1-yl]-2-(methylsulfanyl)adenosine(37) in tRNA + A + H2O. The protein operates within tRNA modification; 2-methylthio-N-6-(cis-hydroxy)isopentenyl adenosine-tRNA biosynthesis. In terms of biological role, involved in specific tRNA modification. Catalyzes the oxygen-dependent hydroxylation of 2-methylthio-N-6-isopentenyl adenosine (ms2i6A) to produce 2-methylthio-N-6-(cis-hydroxy)isopentenyl adenosine (ms2io6A) at position 37 in tRNAs. Can also use N6-(dimethylallyl)adenosine (i6A) as substrate, with lower efficiency. The presence of the hydroxyl group on the tRNA may regulate the ability of S.typhimurium to grow on the citric acid cycle (CAC) intermediates succinate, fumarate and malate. The chain is tRNA 2-(methylsulfanyl)-N(6)-isopentenyladenosine(37) hydroxylase from Salmonella typhimurium (strain LT2 / SGSC1412 / ATCC 700720).